The primary structure comprises 186 residues: Alkyl hydroperoxide reductase AhpD (186 aa).

Residue Cys132 is the Proton donor of the active site. The cysteines at positions 132 and 135 are disulfide-linked. The active-site Cysteine sulfenic acid (-SOH) intermediate is Cys135.

This sequence belongs to the AhpD family.

It carries out the reaction N(6)-[(R)-dihydrolipoyl]-L-lysyl-[lipoyl-carrier protein] + a hydroperoxide = N(6)-[(R)-lipoyl]-L-lysyl-[lipoyl-carrier protein] + an alcohol + H2O. Its function is as follows. Antioxidant protein with alkyl hydroperoxidase activity. Required for the reduction of the AhpC active site cysteine residues and for the regeneration of the AhpC enzyme activity. The chain is Alkyl hydroperoxide reductase AhpD from Anaeromyxobacter dehalogenans (strain 2CP-C).